We begin with the raw amino-acid sequence, 537 residues long: Putative cysteine ligase BshC (537 aa).

A coiled-coil region spans residues 422-450 (IEKVEGMIEQQRRLNKDLLDEVAGNQNNI).

Belongs to the BshC family.

Its function is as follows. Involved in bacillithiol (BSH) biosynthesis. May catalyze the last step of the pathway, the addition of cysteine to glucosamine malate (GlcN-Mal) to generate BSH. The polypeptide is Putative cysteine ligase BshC (Staphylococcus aureus (strain Mu3 / ATCC 700698)).